Consider the following 593-residue polypeptide: Zinc metalloproteinase-disintegrin-like atrase-B (593 aa).

The first 20 residues, 1-20 (MIQALLVIICLAVFPHQGSS), serve as a signal peptide directing secretion. Residues 21 to 191 (IILESGNVND…DESIEKTSQL (171 aa)) constitute a propeptide that is removed on maturation. A Peptidase M12B domain is found at 205–400 (KYIEFYVIVD…DRPQCILNKP (196 aa)). Residues E208 and D292 each contribute to the Ca(2+) site. Cystine bridges form between C316–C395, C356–C379, and C358–C363. N319 carries N-linked (GlcNAc...) asparagine glycosylation. Residue H341 participates in Zn(2+) binding. E342 is a catalytic residue. H345 and H351 together coordinate Zn(2+). Positions 395, 398, 410, 413, 415, 417, 420, and 423 each coordinate Ca(2+). One can recognise a Disintegrin domain in the interval 408-477 (PPICGNYFVE…ECPTDSLQRN (70 aa)). 11 cysteine pairs are disulfide-bonded: C422-C435, C424-C430, C434-C440, C449-C469, C456-C488, C481-C493, C500-C550, C515-C558, C528-C538, C545-C581, and C575-C586. The D/ECD-tripeptide signature appears at 455–457 (DCD). Residues D457, L458, E460, and D472 each coordinate Ca(2+). Residue N490 is glycosylated (N-linked (GlcNAc...) asparagine).

The protein belongs to the venom metalloproteinase (M12B) family. P-III subfamily. P-IIIa sub-subfamily. In terms of assembly, monomer. Requires Zn(2+) as cofactor. Expressed by the venom gland.

The protein localises to the secreted. Inhibited by EDTA, EGTA, 1,10-phenanthroline and DTT. Not inhibited by PMSF and SBTI. In terms of biological role, snake venom zinc protease that inhibits the classical and alternative pathways of complement by cleaving factor B, C6, C7, and C8. Also slowly and selectively degrades alpha-chain of fibrinogen (FGA), and shows edema-inducing activity. In Naja atra (Chinese cobra), this protein is Zinc metalloproteinase-disintegrin-like atrase-B.